The sequence spans 427 residues: Adenylosuccinate synthetase (427 aa).

GTP contacts are provided by residues 12 to 18 and 40 to 42; these read GDEGKGK and GHT. Catalysis depends on Asp-13, which acts as the Proton acceptor. Positions 13 and 40 each coordinate Mg(2+). Residues 13 to 16, 38 to 41, Thr-128, Arg-142, Gln-223, Thr-238, and Arg-302 contribute to the IMP site; these read DEGK and NAGH. The Proton donor role is filled by His-41. 298-304 serves as a coordination point for substrate; that stretch reads TTTGRPR. Residues Arg-304, 330–332, and 412–414 each bind GTP; these read SID and SVG.

It belongs to the adenylosuccinate synthetase family. As to quaternary structure, homodimer. It depends on Mg(2+) as a cofactor.

It localises to the cytoplasm. The enzyme catalyses IMP + L-aspartate + GTP = N(6)-(1,2-dicarboxyethyl)-AMP + GDP + phosphate + 2 H(+). It participates in purine metabolism; AMP biosynthesis via de novo pathway; AMP from IMP: step 1/2. Functionally, plays an important role in the de novo pathway of purine nucleotide biosynthesis. Catalyzes the first committed step in the biosynthesis of AMP from IMP. This chain is Adenylosuccinate synthetase, found in Staphylococcus epidermidis (strain ATCC 35984 / DSM 28319 / BCRC 17069 / CCUG 31568 / BM 3577 / RP62A).